Here is a 314-residue protein sequence, read N- to C-terminus: L-lactate dehydrogenase 2 (314 aa).

Residues valine 16, aspartate 37, lysine 42, tyrosine 68, and 82 to 83 (GL) contribute to the NAD(+) site. Residues glutamine 85, arginine 91, and 123 to 126 (NPVD) contribute to the substrate site. Residues 121–123 (ATN) and serine 146 each bind NAD(+). Position 151 to 154 (151 to 154 (DSAR)) interacts with substrate. 2 residues coordinate beta-D-fructose 1,6-bisphosphate: arginine 156 and histidine 171. Histidine 178 (proton acceptor) is an active-site residue. At tyrosine 223 the chain carries Phosphotyrosine. Threonine 232 contributes to the substrate binding site.

Belongs to the LDH/MDH superfamily. LDH family. Homotetramer.

The protein localises to the cytoplasm. The enzyme catalyses (S)-lactate + NAD(+) = pyruvate + NADH + H(+). Its pathway is fermentation; pyruvate fermentation to lactate; (S)-lactate from pyruvate: step 1/1. Allosterically activated by fructose 1,6-bisphosphate (FBP). In terms of biological role, catalyzes the conversion of lactate to pyruvate. In Bacillus cereus (strain ATCC 10987 / NRS 248), this protein is L-lactate dehydrogenase 2.